A 29-amino-acid chain; its full sequence is Brevinin-2Rd (29 aa).

Cysteines 23 and 29 form a disulfide.

As to expression, expressed by the skin glands.

The protein localises to the secreted. Functionally, antimicrobial peptide. The protein is Brevinin-2Rd of Pelophylax ridibundus (Marsh frog).